The sequence spans 154 residues: SsrA-binding protein (154 aa).

Belongs to the SmpB family.

It localises to the cytoplasm. In terms of biological role, required for rescue of stalled ribosomes mediated by trans-translation. Binds to transfer-messenger RNA (tmRNA), required for stable association of tmRNA with ribosomes. tmRNA and SmpB together mimic tRNA shape, replacing the anticodon stem-loop with SmpB. tmRNA is encoded by the ssrA gene; the 2 termini fold to resemble tRNA(Ala) and it encodes a 'tag peptide', a short internal open reading frame. During trans-translation Ala-aminoacylated tmRNA acts like a tRNA, entering the A-site of stalled ribosomes, displacing the stalled mRNA. The ribosome then switches to translate the ORF on the tmRNA; the nascent peptide is terminated with the 'tag peptide' encoded by the tmRNA and targeted for degradation. The ribosome is freed to recommence translation, which seems to be the essential function of trans-translation. In Staphylococcus aureus (strain Mu3 / ATCC 700698), this protein is SsrA-binding protein.